The following is a 159-amino-acid chain: 2-C-methyl-D-erythritol 2,4-cyclodiphosphate synthase (159 aa).

Residues D8 and H10 each coordinate a divalent metal cation. Residues D8–H10 and H34–S35 contribute to the 4-CDP-2-C-methyl-D-erythritol 2-phosphate site. H42 provides a ligand contact to a divalent metal cation. Residues D56 to G58, F61 to D65, A100 to L106, T132 to E135, F139, and R142 contribute to the 4-CDP-2-C-methyl-D-erythritol 2-phosphate site.

This sequence belongs to the IspF family. Homotrimer. A divalent metal cation is required as a cofactor.

It carries out the reaction 4-CDP-2-C-methyl-D-erythritol 2-phosphate = 2-C-methyl-D-erythritol 2,4-cyclic diphosphate + CMP. The protein operates within isoprenoid biosynthesis; isopentenyl diphosphate biosynthesis via DXP pathway; isopentenyl diphosphate from 1-deoxy-D-xylulose 5-phosphate: step 4/6. Functionally, involved in the biosynthesis of isopentenyl diphosphate (IPP) and dimethylallyl diphosphate (DMAPP), two major building blocks of isoprenoid compounds. Catalyzes the conversion of 4-diphosphocytidyl-2-C-methyl-D-erythritol 2-phosphate (CDP-ME2P) to 2-C-methyl-D-erythritol 2,4-cyclodiphosphate (ME-CPP) with a corresponding release of cytidine 5-monophosphate (CMP). The protein is 2-C-methyl-D-erythritol 2,4-cyclodiphosphate synthase of Salmonella choleraesuis (strain SC-B67).